We begin with the raw amino-acid sequence, 517 residues long: 6-phosphogluconate dehydrogenase, decarboxylating (517 aa).

NADP(+)-binding positions include 35–40 (GLAVMG), 58–60 (NRT), 100–102 (VKA), and Asn128. Substrate-binding positions include Asn128 and 154–156 (SGG). The active-site Proton acceptor is Lys208. Position 211-212 (211-212 (HN)) interacts with substrate. Glu215 acts as the Proton donor in catalysis. Substrate is bound by residues Tyr216, Lys286, Arg313, Arg474, and His480.

Belongs to the 6-phosphogluconate dehydrogenase family. In terms of assembly, homodimer.

It carries out the reaction 6-phospho-D-gluconate + NADP(+) = D-ribulose 5-phosphate + CO2 + NADPH. It participates in carbohydrate degradation; pentose phosphate pathway; D-ribulose 5-phosphate from D-glucose 6-phosphate (oxidative stage): step 3/3. Functionally, catalyzes the oxidative decarboxylation of 6-phosphogluconate to ribulose 5-phosphate and CO(2), with concomitant reduction of NADP to NADPH. In Candida albicans (Yeast), this protein is 6-phosphogluconate dehydrogenase, decarboxylating (DOR14).